A 914-amino-acid chain; its full sequence is Sensor protein TorS (914 aa).

Residues 1–8 (MNLTLTRR) lie on the Cytoplasmic side of the membrane. The helical transmembrane segment at 9 to 29 (LWMGFALMALLTLTSTLVGWY) threads the bilayer. The Periplasmic segment spans residues 30-332 (NLRFISQVEK…EKASARGQYS (303 aa)). A helical transmembrane segment spans residues 333 to 353 (LLLLGMVSLCALILILWRVVY). Residues 354–407 (RSVTRPLAEQTQALQRLLDGDIDSPFPETAGVRELDTIGRLMDAFRSNVHALNR) enclose the HAMP domain. Over 354–914 (RSVTRPLAEQ…WLHKKDLNAI (561 aa)) the chain is Cytoplasmic. Positions 450–664 (AMSHEIRTPL…CFCLRLPLRV (215 aa)) constitute a Histidine kinase domain. His-453 carries the phosphohistidine; by autocatalysis modification. The 116-residue stretch at 683-798 (RLLLIEDNPL…VLGQLLAHYL (116 aa)) folds into the Response regulatory domain. 4-aspartylphosphate is present on Asp-733. The HPt domain occupies 821-914 (GTEKIHEWLV…WLHKKDLNAI (94 aa)). His-860 carries the phosphohistidine modification.

May form homomultimers. Seems to interact with TorT and TorC apocytochrome. Activation requires a sequential transfer of a phosphate group from a His in the primary transmitter domain, to an Asp in the receiver domain and to a His in the secondary transmitter domain.

Its subcellular location is the cell inner membrane. The catalysed reaction is ATP + protein L-histidine = ADP + protein N-phospho-L-histidine.. Inhibited by TorC apocytochrome. Member of the two-component regulatory system TorS/TorR involved in the anaerobic utilization of trimethylamine-N-oxide (TMAO). Detects the presence of TMAO in the medium and, in response, activates TorR via a four-step phosphorelay. When TMAO is removed, TorS can dephosphorylate TorR, probably by a reverse phosphorelay involving His-860 and Asp-733. This Escherichia coli (strain K12) protein is Sensor protein TorS (torS).